Here is a 192-residue protein sequence, read N- to C-terminus: Small ribosomal subunit protein uS5 (192 aa).

Residues 20–83 (FVDKLVHINR…EAAKRGLIRV (64 aa)) form the S5 DRBM domain. Positions 162 to 192 (SVAARRGLKVSALQARRRDADPADTSDAAVA) are disordered.

It belongs to the universal ribosomal protein uS5 family. In terms of assembly, part of the 30S ribosomal subunit. Contacts proteins S4 and S8.

With S4 and S12 plays an important role in translational accuracy. Its function is as follows. Located at the back of the 30S subunit body where it stabilizes the conformation of the head with respect to the body. The polypeptide is Small ribosomal subunit protein uS5 (Methylorubrum populi (strain ATCC BAA-705 / NCIMB 13946 / BJ001) (Methylobacterium populi)).